A 783-amino-acid chain; its full sequence is Protein SEY1 (783 aa).

The Cytoplasmic portion of the chain corresponds to 1–677; sequence MTSQAIQLID…KRSIVTSSTH (677 aa). The 233-residue stretch at 33–265 folds into the GB1/RHD3-type G domain; sequence GFNYHVISVF…YLLKPNYHHK (233 aa). GTP is bound at residue 43 to 50; sequence GSQSSGKS. Residues 449 to 472 adopt a coiled-coil conformation; it reads HEKKLQLRESELNALLSKIKKQLT. Residues 678-698 traverse the membrane as a helical segment; the sequence is IPIWIYAVIVVLGWNEFMIVI. The Lumenal segment spans residues 699 to 701; the sequence is RNP. The helical transmembrane segment at 702–722 threads the bilayer; that stretch reads LFVTLALLSIVSFYFIQKFGL. Topologically, residues 723–783 are cytoplasmic; it reads WGPVMNVVNT…SSSSGNEDSD (61 aa).

Belongs to the TRAFAC class dynamin-like GTPase superfamily. GB1/RHD3 GTPase family. RHD3 subfamily.

The protein resides in the endoplasmic reticulum membrane. In terms of biological role, cooperates with the reticulon proteins and tubule-shaping DP1 family proteins to generate and maintain the structure of the tubular endoplasmic reticulum network. Has GTPase activity, which is required for its function in ER organization. This chain is Protein SEY1, found in Candida glabrata (strain ATCC 2001 / BCRC 20586 / JCM 3761 / NBRC 0622 / NRRL Y-65 / CBS 138) (Yeast).